The sequence spans 373 residues: S-adenosylmethionine:tRNA ribosyltransferase-isomerase (373 aa).

The protein belongs to the QueA family. As to quaternary structure, monomer.

It is found in the cytoplasm. It carries out the reaction 7-aminomethyl-7-carbaguanosine(34) in tRNA + S-adenosyl-L-methionine = epoxyqueuosine(34) in tRNA + adenine + L-methionine + 2 H(+). The protein operates within tRNA modification; tRNA-queuosine biosynthesis. Transfers and isomerizes the ribose moiety from AdoMet to the 7-aminomethyl group of 7-deazaguanine (preQ1-tRNA) to give epoxyqueuosine (oQ-tRNA). The chain is S-adenosylmethionine:tRNA ribosyltransferase-isomerase from Rhizobium etli (strain CIAT 652).